A 251-amino-acid polypeptide reads, in one-letter code: 3-deoxy-manno-octulosonate cytidylyltransferase (251 aa).

This sequence belongs to the KdsB family.

It localises to the cytoplasm. It catalyses the reaction 3-deoxy-alpha-D-manno-oct-2-ulosonate + CTP = CMP-3-deoxy-beta-D-manno-octulosonate + diphosphate. Its pathway is nucleotide-sugar biosynthesis; CMP-3-deoxy-D-manno-octulosonate biosynthesis; CMP-3-deoxy-D-manno-octulosonate from 3-deoxy-D-manno-octulosonate and CTP: step 1/1. The protein operates within bacterial outer membrane biogenesis; lipopolysaccharide biosynthesis. Activates KDO (a required 8-carbon sugar) for incorporation into bacterial lipopolysaccharide in Gram-negative bacteria. The chain is 3-deoxy-manno-octulosonate cytidylyltransferase from Brucella abortus (strain 2308).